We begin with the raw amino-acid sequence, 94 residues long: Pyrimidine/purine nucleoside phosphorylase (94 aa).

Belongs to the nucleoside phosphorylase PpnP family.

It catalyses the reaction a purine D-ribonucleoside + phosphate = a purine nucleobase + alpha-D-ribose 1-phosphate. It carries out the reaction adenosine + phosphate = alpha-D-ribose 1-phosphate + adenine. The enzyme catalyses cytidine + phosphate = cytosine + alpha-D-ribose 1-phosphate. The catalysed reaction is guanosine + phosphate = alpha-D-ribose 1-phosphate + guanine. It catalyses the reaction inosine + phosphate = alpha-D-ribose 1-phosphate + hypoxanthine. It carries out the reaction thymidine + phosphate = 2-deoxy-alpha-D-ribose 1-phosphate + thymine. The enzyme catalyses uridine + phosphate = alpha-D-ribose 1-phosphate + uracil. The catalysed reaction is xanthosine + phosphate = alpha-D-ribose 1-phosphate + xanthine. Its function is as follows. Catalyzes the phosphorolysis of diverse nucleosides, yielding D-ribose 1-phosphate and the respective free bases. Can use uridine, adenosine, guanosine, cytidine, thymidine, inosine and xanthosine as substrates. Also catalyzes the reverse reactions. This is Pyrimidine/purine nucleoside phosphorylase from Vibrio campbellii (strain ATCC BAA-1116).